Reading from the N-terminus, the 217-residue chain is Histone H1C (217 aa).

Low complexity-rich tracts occupy residues 1 to 11 (MAETASTETTP) and 28 to 45 (KKAAGGAKAKKPSGPSAS). Disordered stretches follow at residues 1–45 (MAET…PSAS) and 123–217 (VAKK…AAKK). An H15 domain is found at 40–113 (SGPSASELIV…GASGSFKLNK (74 aa)). Composition is skewed to basic residues over residues 123–151 (VAKKKLVAPKAKKPVTAKKKPKSPKKPKK) and 159–217 (SPKK…AAKK).

Belongs to the histone H1/H5 family.

The protein localises to the nucleus. The protein resides in the chromosome. Histones H1 are necessary for the condensation of nucleosome chains into higher-order structures. This is Histone H1C from Xenopus laevis (African clawed frog).